A 185-amino-acid polypeptide reads, in one-letter code: Elongation factor P (185 aa).

The protein belongs to the elongation factor P family.

The protein resides in the cytoplasm. It functions in the pathway protein biosynthesis; polypeptide chain elongation. Involved in peptide bond synthesis. Stimulates efficient translation and peptide-bond synthesis on native or reconstituted 70S ribosomes in vitro. Probably functions indirectly by altering the affinity of the ribosome for aminoacyl-tRNA, thus increasing their reactivity as acceptors for peptidyl transferase. This is Elongation factor P from Burkholderia mallei (strain NCTC 10247).